A 317-amino-acid chain; its full sequence is sn-1-specific diacylglycerol lipase ABHD11 (317 aa).

The transit peptide at 1–20 (MSNFAMSALCRVFTRGAPCG) directs the protein to the mitochondrion. The AB hydrolase-1 domain occupies 69–304 (PLVFLHGLFG…ASHWIHADKP (236 aa)). Residues S142, E238, and H297 each act as charge relay system in the active site.

It belongs to the AB hydrolase superfamily. Phosphorylated.

It localises to the mitochondrion. It is found in the mitochondrion matrix. It carries out the reaction 1-octadecanoyl-2-(5Z,8Z,11Z,14Z-eicosatetraenoyl)-sn-glycerol + H2O = 2-(5Z,8Z,11Z,14Z-eicosatetraenoyl)-glycerol + octadecanoate + H(+). It catalyses the reaction a 1,2-diacyl-sn-glycerol + H2O = a 2-acylglycerol + a fatty acid + H(+). The enzyme catalyses a 1,3-diacyl-sn-glycerol + H2O = a 1-acyl-sn-glycerol + a fatty acid + H(+). The catalysed reaction is 1-octadecanoyl-2-(9Z-octadecenoyl)-sn-glycerol + H2O = 2-(9Z-octadecenoyl)-glycerol + octadecanoate + H(+). It carries out the reaction 1-octadecanoyl-2-(4Z,7Z,10Z,13Z,16Z,19Z-docosahexaenoyl)-sn-glycerol + H2O = 2-(4Z,7Z,10Z,13Z,16Z,19Z-docosahexaenoyl)-glycerol + octadecanoate + H(+). It catalyses the reaction 1,2-didecanoylglycerol + H2O = decanoylglycerol + decanoate + H(+). Its function is as follows. Catalyzes the hydrolysis of diacylglycerol in vitro and may function as a key regulator in lipid metabolism, namely by regulating the intracellular levels of diacylglycerol. 1,2-diacyl-sn-glycerols are the preferred substrate over 1,3-diacyl-sn-glycerols. The enzyme hydrolyzes stearate in preference to palmitate from the sn-1 position of 1,2-diacyl-sn-glycerols. This is sn-1-specific diacylglycerol lipase ABHD11 from Danio rerio (Zebrafish).